The following is a 343-amino-acid chain: Dihydroorotase (343 aa).

Residues H13 and H15 each contribute to the Zn(2+) site. Substrate-binding positions include 15–17 (HLR) and N41. The Zn(2+) site is built by K99, H136, and H174. The residue at position 99 (K99) is an N6-carboxylysine. Position 136 (H136) interacts with substrate. L219 serves as a coordination point for substrate. D247 contributes to the Zn(2+) binding site. Residue D247 is part of the active site. Substrate contacts are provided by H251 and A263.

Belongs to the metallo-dependent hydrolases superfamily. DHOase family. Class II DHOase subfamily. As to quaternary structure, homodimer. Requires Zn(2+) as cofactor.

The enzyme catalyses (S)-dihydroorotate + H2O = N-carbamoyl-L-aspartate + H(+). Its pathway is pyrimidine metabolism; UMP biosynthesis via de novo pathway; (S)-dihydroorotate from bicarbonate: step 3/3. Its function is as follows. Catalyzes the reversible cyclization of carbamoyl aspartate to dihydroorotate. The sequence is that of Dihydroorotase from Shewanella putrefaciens (strain CN-32 / ATCC BAA-453).